The primary structure comprises 118 residues: Large ribosomal subunit protein uL22 (118 aa).

It belongs to the universal ribosomal protein uL22 family. Part of the 50S ribosomal subunit.

Its function is as follows. This protein binds specifically to 23S rRNA; its binding is stimulated by other ribosomal proteins, e.g. L4, L17, and L20. It is important during the early stages of 50S assembly. It makes multiple contacts with different domains of the 23S rRNA in the assembled 50S subunit and ribosome. Functionally, the globular domain of the protein is located near the polypeptide exit tunnel on the outside of the subunit, while an extended beta-hairpin is found that lines the wall of the exit tunnel in the center of the 70S ribosome. The chain is Large ribosomal subunit protein uL22 from Treponema denticola (strain ATCC 35405 / DSM 14222 / CIP 103919 / JCM 8153 / KCTC 15104).